Reading from the N-terminus, the 74-residue chain is Sodium channel neurotoxin MeuNaTxalpha-6 (74 aa).

A signal peptide spans 1 to 7 (LMTGVES). Residues 9 to 73 (RDAYIAKPHN…VPIRIPGKCH (65 aa)) enclose the LCN-type CS-alpha/beta domain. Cystine bridges form between Cys19–Cys72, Cys23–Cys45, Cys31–Cys55, and Cys35–Cys57. Arg74 is a propeptide (removed by a carboxypeptidase).

Belongs to the long (4 C-C) scorpion toxin superfamily. Sodium channel inhibitor family. Alpha subfamily. As to expression, expressed by the venom gland.

It localises to the secreted. Functionally, alpha toxins bind voltage-independently at site-3 of sodium channels (Nav) and inhibit the inactivation of the activated channels, thereby blocking neuronal transmission. The chain is Sodium channel neurotoxin MeuNaTxalpha-6 from Mesobuthus eupeus (Lesser Asian scorpion).